Consider the following 714-residue polypeptide: Fatty acid oxidation complex subunit alpha (714 aa).

The segment at 1–190 (MDTVSAFKLE…KAGLVDEVVP (190 aa)) is enoyl-CoA hydratase. The segment at 306 to 714 (GSLRSVAVLG…TFWPADERLT (409 aa)) is 3-hydroxyacyl-CoA dehydrogenase.

The protein in the N-terminal section; belongs to the enoyl-CoA hydratase/isomerase family. This sequence in the central section; belongs to the 3-hydroxyacyl-CoA dehydrogenase family. In terms of assembly, heterotetramer of two alpha chains (FadJ) and two beta chains (FadI).

It is found in the cytoplasm. The enzyme catalyses a (3S)-3-hydroxyacyl-CoA = a (2E)-enoyl-CoA + H2O. The catalysed reaction is a 4-saturated-(3S)-3-hydroxyacyl-CoA = a (3E)-enoyl-CoA + H2O. It carries out the reaction a (3S)-3-hydroxyacyl-CoA + NAD(+) = a 3-oxoacyl-CoA + NADH + H(+). It catalyses the reaction (3S)-3-hydroxybutanoyl-CoA = (3R)-3-hydroxybutanoyl-CoA. Its pathway is lipid metabolism; fatty acid beta-oxidation. Functionally, catalyzes the formation of a hydroxyacyl-CoA by addition of water on enoyl-CoA. Also exhibits 3-hydroxyacyl-CoA epimerase and 3-hydroxyacyl-CoA dehydrogenase activities. This is Fatty acid oxidation complex subunit alpha from Klebsiella pneumoniae subsp. pneumoniae (strain ATCC 700721 / MGH 78578).